Consider the following 449-residue polypeptide: tRNA-2-methylthio-N(6)-dimethylallyladenosine synthase (449 aa).

Residues 3-124 form the MTTase N-terminal domain; that stretch reads KMLYIKTYGC…LPTMLEKLDS (122 aa). 6 residues coordinate [4Fe-4S] cluster: cysteine 12, cysteine 48, cysteine 87, cysteine 163, cysteine 167, and cysteine 170. The region spanning 149–380 is the Radical SAM core domain; the sequence is KSPTVSGLVS…QAQLMQQQLE (232 aa). Residues 383 to 447 enclose the TRAM domain; that stretch reads QKLIGKVVPV…ASSLFGEVYA (65 aa).

The protein belongs to the methylthiotransferase family. MiaB subfamily. Monomer. [4Fe-4S] cluster serves as cofactor.

The protein localises to the cytoplasm. It catalyses the reaction N(6)-dimethylallyladenosine(37) in tRNA + (sulfur carrier)-SH + AH2 + 2 S-adenosyl-L-methionine = 2-methylsulfanyl-N(6)-dimethylallyladenosine(37) in tRNA + (sulfur carrier)-H + 5'-deoxyadenosine + L-methionine + A + S-adenosyl-L-homocysteine + 2 H(+). In terms of biological role, catalyzes the methylthiolation of N6-(dimethylallyl)adenosine (i(6)A), leading to the formation of 2-methylthio-N6-(dimethylallyl)adenosine (ms(2)i(6)A) at position 37 in tRNAs that read codons beginning with uridine. This is tRNA-2-methylthio-N(6)-dimethylallyladenosine synthase from Orientia tsutsugamushi (strain Ikeda) (Rickettsia tsutsugamushi).